A 146-amino-acid polypeptide reads, in one-letter code: Myoglobin (146 aa).

The region spanning 2–141 (GDFDMVLKFW…IIADIDATYK (140 aa)) is the Globin domain. His-60 contacts nitrite. His-60 provides a ligand contact to O2. His-89 provides a ligand contact to heme b.

The protein belongs to the globin family. Monomeric.

It is found in the cytoplasm. The protein resides in the sarcoplasm. The catalysed reaction is Fe(III)-heme b-[protein] + nitric oxide + H2O = Fe(II)-heme b-[protein] + nitrite + 2 H(+). It carries out the reaction H2O2 + AH2 = A + 2 H2O. Its function is as follows. Monomeric heme protein which primary function is to store oxygen and facilitate its diffusion within muscle tissues. Reversibly binds oxygen through a pentacoordinated heme iron and enables its timely and efficient release as needed during periods of heightened demand. Depending on the oxidative conditions of tissues and cells, and in addition to its ability to bind oxygen, it also has a nitrite reductase activity whereby it regulates the production of bioactive nitric oxide. Under stress conditions, like hypoxia and anoxia, it also protects cells against reactive oxygen species thanks to its pseudoperoxidase activity. This Tetraodon nigroviridis (Spotted green pufferfish) protein is Myoglobin (mb).